The chain runs to 376 residues: Queuine tRNA-ribosyltransferase (376 aa).

Catalysis depends on aspartate 93, which acts as the Proton acceptor. Residues 93–97, aspartate 147, glutamine 190, and glycine 217 contribute to the substrate site; that span reads DSGGF. Residues 248-254 are RNA binding; that stretch reads GVGKPDD. Aspartate 267 (nucleophile) is an active-site residue. Zn(2+) contacts are provided by cysteine 305, cysteine 307, cysteine 310, and histidine 336.

Belongs to the queuine tRNA-ribosyltransferase family. Homodimer. Within each dimer, one monomer is responsible for RNA recognition and catalysis, while the other monomer binds to the replacement base PreQ1. Zn(2+) serves as cofactor.

The catalysed reaction is 7-aminomethyl-7-carbaguanine + guanosine(34) in tRNA = 7-aminomethyl-7-carbaguanosine(34) in tRNA + guanine. Its pathway is tRNA modification; tRNA-queuosine biosynthesis. Its function is as follows. Catalyzes the base-exchange of a guanine (G) residue with the queuine precursor 7-aminomethyl-7-deazaguanine (PreQ1) at position 34 (anticodon wobble position) in tRNAs with GU(N) anticodons (tRNA-Asp, -Asn, -His and -Tyr). Catalysis occurs through a double-displacement mechanism. The nucleophile active site attacks the C1' of nucleotide 34 to detach the guanine base from the RNA, forming a covalent enzyme-RNA intermediate. The proton acceptor active site deprotonates the incoming PreQ1, allowing a nucleophilic attack on the C1' of the ribose to form the product. After dissociation, two additional enzymatic reactions on the tRNA convert PreQ1 to queuine (Q), resulting in the hypermodified nucleoside queuosine (7-(((4,5-cis-dihydroxy-2-cyclopenten-1-yl)amino)methyl)-7-deazaguanosine). The protein is Queuine tRNA-ribosyltransferase of Ruegeria pomeroyi (strain ATCC 700808 / DSM 15171 / DSS-3) (Silicibacter pomeroyi).